The sequence spans 168 residues: Ribosome maturation factor RimM (168 aa).

The 72-residue stretch at 95–166 (EHEFYYSDII…RIQITPMEGL (72 aa)) folds into the PRC barrel domain.

Belongs to the RimM family. As to quaternary structure, binds ribosomal protein uS19.

It is found in the cytoplasm. Its function is as follows. An accessory protein needed during the final step in the assembly of 30S ribosomal subunit, possibly for assembly of the head region. Essential for efficient processing of 16S rRNA. May be needed both before and after RbfA during the maturation of 16S rRNA. It has affinity for free ribosomal 30S subunits but not for 70S ribosomes. The chain is Ribosome maturation factor RimM from Staphylococcus saprophyticus subsp. saprophyticus (strain ATCC 15305 / DSM 20229 / NCIMB 8711 / NCTC 7292 / S-41).